Reading from the N-terminus, the 148-residue chain is 3-dehydroquinate dehydratase (148 aa).

The Proton acceptor role is filled by Tyr-23. Residues Asn-75, His-81, and Asp-88 each contribute to the substrate site. Catalysis depends on His-101, which acts as the Proton donor. Substrate is bound by residues 102–103 (LS) and Arg-112.

Belongs to the type-II 3-dehydroquinase family. Homododecamer.

The enzyme catalyses 3-dehydroquinate = 3-dehydroshikimate + H2O. It participates in metabolic intermediate biosynthesis; chorismate biosynthesis; chorismate from D-erythrose 4-phosphate and phosphoenolpyruvate: step 3/7. In terms of biological role, catalyzes a trans-dehydration via an enolate intermediate. This chain is 3-dehydroquinate dehydratase, found in Xylella fastidiosa (strain M23).